The following is a 332-amino-acid chain: Phenylalanine--tRNA ligase alpha subunit (332 aa).

E252 serves as a coordination point for Mg(2+).

It belongs to the class-II aminoacyl-tRNA synthetase family. Phe-tRNA synthetase alpha subunit type 1 subfamily. As to quaternary structure, tetramer of two alpha and two beta subunits. The cofactor is Mg(2+).

It localises to the cytoplasm. The enzyme catalyses tRNA(Phe) + L-phenylalanine + ATP = L-phenylalanyl-tRNA(Phe) + AMP + diphosphate + H(+). In Marinobacter nauticus (strain ATCC 700491 / DSM 11845 / VT8) (Marinobacter aquaeolei), this protein is Phenylalanine--tRNA ligase alpha subunit.